The chain runs to 271 residues: Co-chaperone protein DjlA (271 aa).

The Periplasmic segment spans residues 1-6; the sequence is MQYWGK. The chain crosses the membrane as a helical span at residues 7-31; sequence IIGVAVALLMGGGFWGVVLGLLIGH. Topologically, residues 32–271 are cytoplasmic; that stretch reads MFDKARSRKM…ELIKQQKGFK (240 aa). The region spanning 205–271 is the J domain; sequence DACNVLGVKP…ELIKQQKGFK (67 aa).

Homodimer.

The protein localises to the cell inner membrane. In terms of biological role, regulatory DnaK co-chaperone. Direct interaction between DnaK and DjlA is needed for the induction of the wcaABCDE operon, involved in the synthesis of a colanic acid polysaccharide capsule, possibly through activation of the RcsB/RcsC phosphotransfer signaling pathway. The colanic acid capsule may help the bacterium survive conditions outside the host. This is Co-chaperone protein DjlA from Escherichia coli O157:H7.